The following is a 1866-amino-acid chain: Protein NLRC5 (1866 aa).

Residues G105 to Q135 form a disordered region. Positions R222–Q539 constitute an NACHT domain. Residue G228 to T235 coordinates ATP. LRR repeat units lie at residues L599–T622, M713–A737, C741–V765, L769–R792, G869–E892, L897–A921, E930–G953, S976–G1000, L1004–Q1026, L1031–T1058, L1138–Q1161, L1162–A1184, C1242–E1265, I1272–T1294, C1462–S1488, L1493–S1516, C1521–R1544, R1554–M1577, T1578–E1600, A1605–T1628, L1633–E1656, C1661–Q1684, P1687–G1714, S1715–L1739, L1741–S1762, and M1795–E1818.

Belongs to the NLRP family. Interacts with CHUK and IKBKB; prevents CHUK and IKBKB phosphorylation and inhibits their kinase activity. Interacts with RIGI and IFIH1; blocks the interaction of MAVS to RIGI. As to expression, expressed in spleen, thymus, lung, brain, tonsil, heart and prostate.

The protein localises to the cytoplasm. Probable regulator of the NF-kappa-B and type I interferon signaling pathways. May also regulate the type II interferon signaling pathway. Plays a role in homeostatic control of innate immunity and in antiviral defense mechanisms. The protein is Protein NLRC5 (NLRC5) of Homo sapiens (Human).